A 494-amino-acid chain; its full sequence is Aspartyl/glutamyl-tRNA(Asn/Gln) amidotransferase subunit B (494 aa).

Belongs to the GatB/GatE family. GatB subfamily. Heterotrimer of A, B and C subunits.

The enzyme catalyses L-glutamyl-tRNA(Gln) + L-glutamine + ATP + H2O = L-glutaminyl-tRNA(Gln) + L-glutamate + ADP + phosphate + H(+). It carries out the reaction L-aspartyl-tRNA(Asn) + L-glutamine + ATP + H2O = L-asparaginyl-tRNA(Asn) + L-glutamate + ADP + phosphate + 2 H(+). Functionally, allows the formation of correctly charged Asn-tRNA(Asn) or Gln-tRNA(Gln) through the transamidation of misacylated Asp-tRNA(Asn) or Glu-tRNA(Gln) in organisms which lack either or both of asparaginyl-tRNA or glutaminyl-tRNA synthetases. The reaction takes place in the presence of glutamine and ATP through an activated phospho-Asp-tRNA(Asn) or phospho-Glu-tRNA(Gln). In Trichodesmium erythraeum (strain IMS101), this protein is Aspartyl/glutamyl-tRNA(Asn/Gln) amidotransferase subunit B.